A 131-amino-acid chain; its full sequence is Small ribosomal subunit protein uS8 (131 aa).

The protein belongs to the universal ribosomal protein uS8 family. In terms of assembly, part of the 30S ribosomal subunit. Contacts proteins S5 and S12.

Its function is as follows. One of the primary rRNA binding proteins, it binds directly to 16S rRNA central domain where it helps coordinate assembly of the platform of the 30S subunit. The chain is Small ribosomal subunit protein uS8 from Finegoldia magna (strain ATCC 29328 / DSM 20472 / WAL 2508) (Peptostreptococcus magnus).